The chain runs to 421 residues: UDP-glucuronic acid decarboxylase 1 (421 aa).

Over 1-19 (MVRTRIQRLLTGINRRMMK) the chain is Cytoplasmic. A helical membrane pass occupies residues 20–40 (LLIALALIAYVASVWGNFVNM). The Lumenal segment spans residues 41–421 (SKSIQENGEQ…RVKKGRTRHN (381 aa)). Positions 99, 100, 101, 120, 121, 123, 124, 125, 145, and 146 each coordinate NAD(+). UDP-alpha-D-glucuronate is bound by residues Leu-150 and Tyr-151. Residues Leu-160 and Ser-162 each coordinate NAD(+). Lys-178 is a binding site for UDP-alpha-D-glucuronate. Residue Thr-179 coordinates NAD(+). Positions 186, 189, 192, and 193 each coordinate UDP-alpha-D-glucuronate. NAD(+)-binding residues include Ala-201, Tyr-232, and Lys-236. The active-site Proton acceptor is Tyr-232. UDP-alpha-D-glucuronate is bound by residues Tyr-246, Gln-249, and Glu-250. Residues Thr-262, His-268, and Arg-273 each contribute to the NAD(+) site. 2 N-linked (GlcNAc...) asparagine glycosylation sites follow: Asn-317 and Asn-386. The interval 400–421 (ANNQYIPKPKPARVKKGRTRHN) is disordered. The segment covering 409 to 421 (KPARVKKGRTRHN) has biased composition (basic residues).

The protein belongs to the NAD(P)-dependent epimerase/dehydratase family. UDP-glucuronic acid decarboxylase subfamily. In terms of assembly, homodimer and homotetramer. Requires NAD(+) as cofactor.

The protein localises to the golgi apparatus. The protein resides in the golgi stack membrane. The catalysed reaction is UDP-alpha-D-glucuronate + H(+) = UDP-alpha-D-xylose + CO2. It participates in nucleotide-sugar biosynthesis; UDP-alpha-D-xylose biosynthesis; UDP-alpha-D-xylose from UDP-alpha-D-glucuronate: step 1/1. Catalyzes the NAD-dependent decarboxylation of UDP-glucuronic acid to UDP-xylose. Necessary for the biosynthesis of the core tetrasaccharide in glycosaminoglycan biosynthesis. The sequence is that of UDP-glucuronic acid decarboxylase 1 (uxs1) from Xenopus tropicalis (Western clawed frog).